A 240-amino-acid polypeptide reads, in one-letter code: MNDILFIIQARMGSTRLPGKVLRPLGSNRLLDILVHRVRQSAFYQKDRDNLVIATSDKETDDILEAHCIKQGFRVFRGSEERVLDRFVKVIEAVKPSVIIRLTGDNPFVDPELLDVMIQAHFDQGSDYTYILNAPLGICGEVVNANLLIDISRIQALEDQYQEHVTLYIRNHPALYRVQFLEAPERFRAPQYRLTIDTKEDYESIKALYQKAGERPDVSASELITLLNRNPDAATEREAD.

Belongs to the CMP-NeuNAc synthase family.

Its pathway is spore coat biogenesis; spore coat polysaccharide biosynthesis. In Bacillus subtilis (strain 168), this protein is Spore coat polysaccharide biosynthesis protein SpsF (spsF).